We begin with the raw amino-acid sequence, 484 residues long: Glutamate--tRNA ligase (484 aa).

Positions proline 9 to threonine 19 match the 'HIGH' region motif. Residues cysteine 98, cysteine 100, histidine 125, and histidine 127 each contribute to the Zn(2+) site. The 'KMSKS' region motif lies at lysine 250–arginine 254. An ATP-binding site is contributed by lysine 253.

The protein belongs to the class-I aminoacyl-tRNA synthetase family. Glutamate--tRNA ligase type 1 subfamily. In terms of assembly, monomer. Zn(2+) serves as cofactor.

The protein localises to the cytoplasm. It catalyses the reaction tRNA(Glu) + L-glutamate + ATP = L-glutamyl-tRNA(Glu) + AMP + diphosphate. In terms of biological role, catalyzes the attachment of glutamate to tRNA(Glu) in a two-step reaction: glutamate is first activated by ATP to form Glu-AMP and then transferred to the acceptor end of tRNA(Glu). This chain is Glutamate--tRNA ligase, found in Crocosphaera subtropica (strain ATCC 51142 / BH68) (Cyanothece sp. (strain ATCC 51142)).